The primary structure comprises 412 residues: Argininosuccinate synthase (412 aa).

ATP-binding positions include 12–20 (AYSGGLDTS) and Ala39. Positions 91 and 96 each coordinate L-citrulline. Gly121 contributes to the ATP binding site. Residues Thr123, Asn127, and Asp128 each contribute to the L-aspartate site. An L-citrulline-binding site is contributed by Asn127. Residues Arg131, Ser180, Ser189, Glu265, and Tyr277 each coordinate L-citrulline.

This sequence belongs to the argininosuccinate synthase family. Type 1 subfamily. As to quaternary structure, homotetramer.

The protein resides in the cytoplasm. The enzyme catalyses L-citrulline + L-aspartate + ATP = 2-(N(omega)-L-arginino)succinate + AMP + diphosphate + H(+). It functions in the pathway amino-acid biosynthesis; L-arginine biosynthesis; L-arginine from L-ornithine and carbamoyl phosphate: step 2/3. This Pseudoalteromonas atlantica (strain T6c / ATCC BAA-1087) protein is Argininosuccinate synthase.